A 55-amino-acid chain; its full sequence is Accessory gland-specific peptide 70A (55 aa).

Positions 1-19 are cleaved as a signal peptide; that stretch reads MKTLSLFLVLVCLLGLVQS. Residues Pro-28, Pro-32, Pro-34, and Pro-38 each carry the hydroxyproline modification. A disulfide bridge links Cys-43 with Cys-55.

In terms of tissue distribution, main cells of the accessory glands of males (paragonial gland).

It localises to the secreted. Functionally, represses female sexual receptivity and stimulates oviposition. The protein is Accessory gland-specific peptide 70A (Acp70A) of Drosophila mauritiana (Fruit fly).